The following is a 735-amino-acid chain: Disintegrin and metalloproteinase domain-containing protein 2 (735 aa).

The signal sequence occupies residues 1-16 (MWRVLFLLSGLGGLWM). Residues 17-174 (DSNFDSLPVQ…FKLQSIEPQK (158 aa)) constitute a propeptide that is removed on maturation. At 17 to 686 (DSNFDSLPVQ…ENVYHSKPMR (670 aa)) the chain is on the extracellular side. N-linked (GlcNAc...) asparagine glycans are attached at residues Asn-76, Asn-122, and Asn-220. The region spanning 178-375 (KYIEMHVVVE…QKSQCLHNQP (198 aa)) is the Peptidase M12B domain. Cystine bridges form between Cys-287/Cys-370, Cys-329/Cys-354, Cys-331/Cys-336, and Cys-445/Cys-465. Asn-353, Asn-459, and Asn-566 each carry an N-linked (GlcNAc...) asparagine glycan. In terms of domain architecture, Disintegrin spans 384 to 473 (QAVCGNAKLE…SCPENHFIQT (90 aa)). The EGF-like domain occupies 612-645 (LGYDCTTDKCNHRGVCNNKKHCHCSASYLPPDCS). Intrachain disulfides connect Cys-616-Cys-627, Cys-621-Cys-633, and Cys-635-Cys-644. Residues 687–707 (WPLFLFIPFFIIFCVLIAIMV) traverse the membrane as a helical segment. Over 708-735 (KVHFQRKKWRTEDYSTDEQPESESEPKG) the chain is Cytoplasmic. The residue at position 729 (Ser-729) is a Phosphoserine.

Heterodimer with ADAM1/fertilin subunit alpha. The signal and the metalloprotease domain are cleaved during the epididymal maturation of the spermatozoa. As to expression, expressed specifically in testis.

The protein resides in the membrane. Functionally, sperm surface membrane protein that may be involved in sperm-egg plasma membrane adhesion and fusion during fertilization. Could have a direct role in sperm-zona binding or migration of sperm from the uterus into the oviduct. Interactions with egg membrane could be mediated via binding between its disintegrin-like domain to one or more integrins receptors on the egg. This is a non catalytic metalloprotease-like protein. The protein is Disintegrin and metalloproteinase domain-containing protein 2 (ADAM2) of Macaca fascicularis (Crab-eating macaque).